Reading from the N-terminus, the 45-residue chain is LLACLFGNGRCSSNRDCCELTPVCKRGSCVSSGPGLVGGILGGIL.

Intrachain disulfides connect C4–C18, C11–C24, and C17–C29.

This sequence belongs to the neurotoxin 15 family. 02 (omega-actx) subfamily. Expressed by the venom gland.

The protein resides in the secreted. In terms of biological role, potent inhibitor of insect (bee brain), but not mammalian (rat trigeminal neurons), voltage-gated calcium channels (Cav). In vivo, injection into lone star ticks (Amblyomma americanum) induces curling of all eight legs into closed loops, followed by death. The protein is Omega-hexatoxin-Hv2a of Hadronyche versuta (Blue mountains funnel-web spider).